The sequence spans 373 residues: Ubiquitin carboxyl-terminal hydrolase 50 (373 aa).

In terms of domain architecture, USP spans 44 to 364 (TGLRNLGNTC…TAYLLFYSCQ (321 aa)). The active-site Nucleophile is cysteine 53. The active-site Proton acceptor is the histidine 322.

Belongs to the peptidase C19 family.

Its subcellular location is the cytoplasm. The protein localises to the cytoskeleton. It localises to the microtubule organizing center. It is found in the centrosome. The protein resides in the nucleus. The catalysed reaction is Thiol-dependent hydrolysis of ester, thioester, amide, peptide and isopeptide bonds formed by the C-terminal Gly of ubiquitin (a 76-residue protein attached to proteins as an intracellular targeting signal).. Its function is as follows. Deubiquitinating enzyme that removes conjugated ubiquitin from specific proteins to regulate different cellular processes. Regulates the inflammasome signaling pathway by deubiquitinating 'Lys-63'-linked polyubiquitination of the PYCARD/ASC adapter protein. Regulates the ubiquitination and stability of the ACE2 protein. Acts as a negative regulator of the G2/M checkpoint pathway, by preventing serine/threonine kinase WEE1 degradation, thereby repressing entry into mitosis following activation of the G2/M DNA damage checkpoint. In Macaca fascicularis (Crab-eating macaque), this protein is Ubiquitin carboxyl-terminal hydrolase 50 (USP50).